Consider the following 275-residue polypeptide: MTAITISDQEYRDFSRFLESQCGIVLGDSKQYLVRSRLSPLVTKFKLASLSDLLRDVVAGRNRELRIAAVDAMTTNETLWFRDTYPFTVLADKLLPEVAANKRPIKIWSAASSSGQEPYSIAMTILETQQRKPGLLPSVSITATDISASMLEMCRAGVYDNLALGRGLSPERRRTFFEDAGDGRMKVKDNVKRLVNFRPQNLMDSYALMGKFDIIFCRNVLIYFSPEMKSKVLNQMASSLNPGGYLLLGASESLTGLTDKFEMVRCNPGIIYKLK.

The CheR-type methyltransferase domain occupies 1–275 (MTAITISDQE…CNPGIIYKLK (275 aa)). Residues Asn76, Thr78, Arg82, Glu117, Asp145, 201-202 (NL), and 218-219 (RN) contribute to the S-adenosyl-L-methionine site.

The catalysed reaction is L-glutamyl-[protein] + S-adenosyl-L-methionine = [protein]-L-glutamate 5-O-methyl ester + S-adenosyl-L-homocysteine. Methylation of the membrane-bound methyl-accepting chemotaxis proteins (MCP) to form gamma-glutamyl methyl ester residues in MCP. This is Chemotaxis protein methyltransferase (cheR) from Vibrio parahaemolyticus serotype O3:K6 (strain RIMD 2210633).